The primary structure comprises 334 residues: Glyceraldehyde-3-phosphate dehydrogenase (334 aa).

NAD(+)-binding positions include 11-12 (RI), Asp33, and Ser119. Residues 149–151 (SCT) and Thr180 each bind D-glyceraldehyde 3-phosphate. Cys150 (nucleophile) is an active-site residue. Asn181 contributes to the NAD(+) binding site. D-glyceraldehyde 3-phosphate-binding positions include Arg197, 210–211 (TG), and Arg233. Asn314 is an NAD(+) binding site.

The protein belongs to the glyceraldehyde-3-phosphate dehydrogenase family. In terms of assembly, homotetramer.

It localises to the cytoplasm. The enzyme catalyses D-glyceraldehyde 3-phosphate + phosphate + NAD(+) = (2R)-3-phospho-glyceroyl phosphate + NADH + H(+). It functions in the pathway carbohydrate degradation; glycolysis; pyruvate from D-glyceraldehyde 3-phosphate: step 1/5. Functionally, catalyzes the oxidative phosphorylation of glyceraldehyde 3-phosphate (G3P) to 1,3-bisphosphoglycerate (BPG) using the cofactor NAD. The first reaction step involves the formation of a hemiacetal intermediate between G3P and a cysteine residue, and this hemiacetal intermediate is then oxidized to a thioester, with concomitant reduction of NAD to NADH. The reduced NADH is then exchanged with the second NAD, and the thioester is attacked by a nucleophilic inorganic phosphate to produce BPG. The protein is Glyceraldehyde-3-phosphate dehydrogenase (gap) of Clostridium pasteurianum.